Here is a 483-residue protein sequence, read N- to C-terminus: Septin-8 (483 aa).

Positions 1–16 (MAATDLERFSNAEPEP) are enriched in basic and acidic residues. Residues 1–22 (MAATDLERFSNAEPEPRSLSLG) form a disordered region. Residue A2 is modified to N-acetylalanine. A Phosphoserine modification is found at S10. The region spanning 41–307 (QGFSFNILCV…ELYRRCKLEE (267 aa)) is the Septin-type G domain. A G1 motif region spans residues 51 to 58 (GETGIGKS). Residues 51–58 (GETGIGKS), G106, 187–195 (KADTISKSE), G241, and R256 contribute to the GTP site. The segment at 103-106 (DAVG) is G3 motif. The tract at residues 186–189 (AKAD) is G4 motif. The stretch at 320–413 (FSLQETYEAK…AVEALQSQAL (94 aa)) forms a coiled coil. A compositionally biased stretch (polar residues) spans 411–420 (QALHATSQQP). Residues 411 to 443 (QALHATSQQPLRKDKDKKNRSDIGAHQPGMSLS) form a disordered region. A compositionally biased stretch (basic and acidic residues) spans 421-433 (LRKDKDKKNRSDI).

The protein belongs to the TRAFAC class TrmE-Era-EngA-EngB-Septin-like GTPase superfamily. Septin GTPase family. Septins polymerize into heterooligomeric protein complexes that form filaments, and can associate with cellular membranes, actin filaments and microtubules. GTPase activity is required for filament formation. Interacts with CDK14. Interacts with SEPTIN5. Interacts with SEPTIN7. Interacts with SEPTIN4. Interacts with VAMP2; the interaction inhibits interaction of VAMP2 with SYP. Interacts with STX1A. In terms of tissue distribution, widely expressed, including in brain, heart and platelets; most abundant in aorta. Isoform 2 is expressed at low levels in specific brain areas, such as occipital pole, frontal lobe, temporal lobe and putamen. Isoform 1 and 3 are highly expressed in specific brain areas, such as occipital pole, frontal lobe, temporal lobe and putamen. Isoform 2 is highly expressed in prostate, testis and ovary. Isoform 1 and isoform 3 are expressed at low levels in prostate, testis and ovary.

It localises to the cytoplasm. The protein resides in the cytoskeleton. Its subcellular location is the synapse. The protein localises to the cell projection. It is found in the axon. It localises to the cytoplasmic vesicle. The protein resides in the secretory vesicle. Its subcellular location is the synaptic vesicle membrane. The protein localises to the presynapse. Functionally, filament-forming cytoskeletal GTPase. May play a role in platelet secretion. Seems to participate in the process of SNARE complex formation in synaptic vesicles. In terms of biological role, stabilizes BACE1 protein levels and promotes the sorting and accumulation of BACE1 to the recycling or endosomal compartments, modulating the beta-amyloidogenic processing of APP. This is Septin-8 from Homo sapiens (Human).